The following is a 208-amino-acid chain: Large ribosomal subunit protein uL4 (208 aa).

Residues 44 to 79 form a disordered region; it reads QRQGTHKSKERSEISGSTRKIGRQKGGGGARRGDMN.

The protein belongs to the universal ribosomal protein uL4 family. Part of the 50S ribosomal subunit.

One of the primary rRNA binding proteins, this protein initially binds near the 5'-end of the 23S rRNA. It is important during the early stages of 50S assembly. It makes multiple contacts with different domains of the 23S rRNA in the assembled 50S subunit and ribosome. Functionally, forms part of the polypeptide exit tunnel. The sequence is that of Large ribosomal subunit protein uL4 from Bacteroides fragilis (strain YCH46).